Here is a 305-residue protein sequence, read N- to C-terminus: MKISLVVPVFNEEEAIPIFYKTVREFEELKPYEVEIVFINDGSKDATESIINALAVSDPLVVPLSFTRNFGKEPALFAGLDHTTGDAVIPIDVDLQDPIEVIPRLIEKWQAGADMVLAKRSDRSTDGRLKRKTAEWFYKLHNKISTPKIEENVGDFRLMSREVVENIKLLPERNLFMKGILSWVGGQTDVVEYVRTERVAGISKFNGWKLWNLALEGITSFSTFPLRVWTYIGLFVASISFLYGAWMIIDTIVFGNPVRGYPSMLVSILFLGGVQLIGIGVLGEYIGRIYLETKSRPRYLIKSRK.

The next 2 helical transmembrane spans lie at 229 to 249 (WTYIGLFVASISFLYGAWMII) and 263 to 283 (SMLVSILFLGGVQLIGIGVLG).

The protein belongs to the glycosyltransferase 2 family. GtrB subfamily.

It localises to the host membrane. In terms of biological role, involved in O antigen modification. Catalyzes the transfer of the glucose residue from UDP-glucose to a lipid carrier. This chain is Bactoprenol glucosyl transferase (gtrB), found in Shigella phage SfX (Shigella flexneri bacteriophage X).